The primary structure comprises 617 residues: Transmembrane protein 232 (617 aa).

A helical membrane pass occupies residues 129-149; that stretch reads LVKIGYLIFLRLFVFFLHGHL. A coiled-coil region spans residues 567 to 604; the sequence is LKQIEAVCEAQNRKDEEEKEKIRFQEIMKQRERKLNKQ. Positions 598 to 617 are disordered; it reads ERKLNKQTKPYEITPSEKKE.

The protein localises to the membrane. Its function is as follows. Plays a critical role for male fertility and sperm motility by regulating sperm cytoplasm removal and maintaining axoneme integrity. The polypeptide is Transmembrane protein 232 (Tmem232) (Rattus norvegicus (Rat)).